The primary structure comprises 631 residues: Phosphomethylpyrimidine synthase (631 aa).

Substrate is bound by residues Asn-239, Met-268, Tyr-297, His-333, 353–355 (SRG), 394–397 (DGLR), and Glu-433. His-437 provides a ligand contact to Zn(2+). Substrate is bound at residue Tyr-460. His-501 is a Zn(2+) binding site. 3 residues coordinate [4Fe-4S] cluster: Cys-581, Cys-584, and Cys-589.

This sequence belongs to the ThiC family. In terms of assembly, homodimer. The cofactor is [4Fe-4S] cluster.

The catalysed reaction is 5-amino-1-(5-phospho-beta-D-ribosyl)imidazole + S-adenosyl-L-methionine = 4-amino-2-methyl-5-(phosphooxymethyl)pyrimidine + CO + 5'-deoxyadenosine + formate + L-methionine + 3 H(+). The protein operates within cofactor biosynthesis; thiamine diphosphate biosynthesis. In terms of biological role, catalyzes the synthesis of the hydroxymethylpyrimidine phosphate (HMP-P) moiety of thiamine from aminoimidazole ribotide (AIR) in a radical S-adenosyl-L-methionine (SAM)-dependent reaction. The sequence is that of Phosphomethylpyrimidine synthase from Ralstonia nicotianae (strain ATCC BAA-1114 / GMI1000) (Ralstonia solanacearum).